Reading from the N-terminus, the 65-residue chain is UPF0434 protein RPB_0294 (65 aa).

This sequence belongs to the UPF0434 family.

This chain is UPF0434 protein RPB_0294, found in Rhodopseudomonas palustris (strain HaA2).